The primary structure comprises 353 residues: Pleckstrin-2 (353 aa).

N-acetylmethionine is present on Met-1. A PH 1 domain is found at 4–104 (GVLKEGFLVK…WAFEITGAIH (101 aa)). Phosphoserine is present on Ser-120. A DEP domain is found at 139–225 (TSTGIRPSPN…DSTALYTFAE (87 aa)). The region spanning 247–353 (TVVKQGYLSK…EWIEAIKKLT (107 aa)) is the PH 2 domain.

As to expression, ubiquitous. Most abundant in the thymus, large bowel, small bowel, stomach, and prostate.

It is found in the cell projection. Its subcellular location is the lamellipodium membrane. The protein localises to the cytoplasm. The protein resides in the cytoskeleton. May help orchestrate cytoskeletal arrangement. Contribute to lamellipodia formation. Overexpression of pleckstrin 2 causes large lamellipodia and peripheral ruffle formation. In Mus musculus (Mouse), this protein is Pleckstrin-2 (Plek2).